The sequence spans 344 residues: tRNA N6-adenosine threonylcarbamoyltransferase (344 aa).

Residues His-116 and His-120 each contribute to the Fe cation site. Residues 138–142 (LVSGG), Asp-171, Gly-184, Asp-188, and Asn-277 each bind substrate. Asp-307 serves as a coordination point for Fe cation.

Belongs to the KAE1 / TsaD family. It depends on Fe(2+) as a cofactor.

The protein resides in the cytoplasm. It catalyses the reaction L-threonylcarbamoyladenylate + adenosine(37) in tRNA = N(6)-L-threonylcarbamoyladenosine(37) in tRNA + AMP + H(+). In terms of biological role, required for the formation of a threonylcarbamoyl group on adenosine at position 37 (t(6)A37) in tRNAs that read codons beginning with adenine. Is involved in the transfer of the threonylcarbamoyl moiety of threonylcarbamoyl-AMP (TC-AMP) to the N6 group of A37, together with TsaE and TsaB. TsaD likely plays a direct catalytic role in this reaction. The protein is tRNA N6-adenosine threonylcarbamoyltransferase of Latilactobacillus sakei subsp. sakei (strain 23K) (Lactobacillus sakei subsp. sakei).